A 65-amino-acid chain; its full sequence is Sarcoplasmic/endoplasmic reticulum calcium ATPase regulator ARLN (65 aa).

An N-acetylmethionine modification is found at Met1. Residues 1-38 (MEVGQAASGTDGVRERRGSSAARRRSQDEPVQSGMNGI) are disordered. Phosphoserine is present on residues Ser19 and Ser26. Residues 44–64 (WLDLWLFILFDLALFIFVYLL) form a helical membrane-spanning segment.

In terms of assembly, homooligomer. Can also form heterooligomers with other sarcoplasmic/endoplasmic reticulum calcium ATPase (SERCA) regulators ERLN, PLN, SLN and STRIT1/DWORF. Monomer. Interacts as a monomer with ATP2A2/SERCA2; the interaction results in inhibition of ATP2A2 Ca(2+) affinity.

Its subcellular location is the endoplasmic reticulum membrane. Functionally, inhibits the activity of the calcium ATPases ATP2A2/SERCA2 and ATP2A3/SERCA3 by decreasing their apparent affinity for Ca(2+). In Rattus norvegicus (Rat), this protein is Sarcoplasmic/endoplasmic reticulum calcium ATPase regulator ARLN (Arln).